The following is a 244-amino-acid chain: tRNA (guanine-N(7)-)-methyltransferase (244 aa).

Polar residues predominate over residues 1-10; sequence MSDTPQSPAQ. The tract at residues 1–20 is disordered; the sequence is MSDTPQSPAQDSLAEHDEAR. Residues glutamate 74, glutamate 99, aspartate 126, and aspartate 149 each coordinate S-adenosyl-L-methionine. Aspartate 149 is an active-site residue. Residues lysine 153, aspartate 185, and 222–225 each bind substrate; that span reads TKFE.

It belongs to the class I-like SAM-binding methyltransferase superfamily. TrmB family.

It carries out the reaction guanosine(46) in tRNA + S-adenosyl-L-methionine = N(7)-methylguanosine(46) in tRNA + S-adenosyl-L-homocysteine. Its pathway is tRNA modification; N(7)-methylguanine-tRNA biosynthesis. Catalyzes the formation of N(7)-methylguanine at position 46 (m7G46) in tRNA. The protein is tRNA (guanine-N(7)-)-methyltransferase of Pseudomonas paraeruginosa (strain DSM 24068 / PA7) (Pseudomonas aeruginosa (strain PA7)).